We begin with the raw amino-acid sequence, 365 residues long: 2-aminoethylphosphonate--pyruvate transaminase (365 aa).

Lys194 carries the N6-(pyridoxal phosphate)lysine modification.

The protein belongs to the class-V pyridoxal-phosphate-dependent aminotransferase family. PhnW subfamily. Homodimer. It depends on pyridoxal 5'-phosphate as a cofactor.

The enzyme catalyses (2-aminoethyl)phosphonate + pyruvate = phosphonoacetaldehyde + L-alanine. Its function is as follows. Involved in phosphonate degradation. The sequence is that of 2-aminoethylphosphonate--pyruvate transaminase from Bacillus cereus (strain ATCC 10987 / NRS 248).